A 654-amino-acid chain; its full sequence is Acetyl-coenzyme A synthetase (654 aa).

CoA contacts are provided by residues 190 to 193 (RGGK) and Thr313. ATP contacts are provided by residues 389–391 (GEP), 413–418 (DTWWQT), Asp504, and Arg519. Residue Ser527 participates in CoA binding. An ATP-binding site is contributed by Arg530. Residues Val541, His543, and Val546 each contribute to the Mg(2+) site. At Lys613 the chain carries N6-acetyllysine.

Belongs to the ATP-dependent AMP-binding enzyme family. Requires Mg(2+) as cofactor. In terms of processing, acetylated. Deacetylation by the SIR2-homolog deacetylase activates the enzyme.

The catalysed reaction is acetate + ATP + CoA = acetyl-CoA + AMP + diphosphate. Catalyzes the conversion of acetate into acetyl-CoA (AcCoA), an essential intermediate at the junction of anabolic and catabolic pathways. AcsA undergoes a two-step reaction. In the first half reaction, AcsA combines acetate with ATP to form acetyl-adenylate (AcAMP) intermediate. In the second half reaction, it can then transfer the acetyl group from AcAMP to the sulfhydryl group of CoA, forming the product AcCoA. The sequence is that of Acetyl-coenzyme A synthetase from Leptospira biflexa serovar Patoc (strain Patoc 1 / Ames).